A 392-amino-acid chain; its full sequence is 8-amino-7-oxononanoate synthase (392 aa).

Arginine 26 provides a ligand contact to substrate. Residue 113–114 (GY) participates in pyridoxal 5'-phosphate binding. Residue histidine 138 participates in substrate binding. Pyridoxal 5'-phosphate is bound by residues serine 186, histidine 214, and threonine 241. An N6-(pyridoxal phosphate)lysine modification is found at lysine 244. Threonine 353 lines the substrate pocket.

This sequence belongs to the class-II pyridoxal-phosphate-dependent aminotransferase family. BioF subfamily. In terms of assembly, homodimer. Pyridoxal 5'-phosphate is required as a cofactor.

The enzyme catalyses 6-carboxyhexanoyl-[ACP] + L-alanine + H(+) = (8S)-8-amino-7-oxononanoate + holo-[ACP] + CO2. The protein operates within cofactor biosynthesis; biotin biosynthesis. In terms of biological role, catalyzes the decarboxylative condensation of pimeloyl-[acyl-carrier protein] and L-alanine to produce 8-amino-7-oxononanoate (AON), [acyl-carrier protein], and carbon dioxide. The chain is 8-amino-7-oxononanoate synthase from Maricaulis maris (strain MCS10) (Caulobacter maris).